The primary structure comprises 401 residues: Elongation factor Tu (401 aa).

The tr-type G domain maps to 10-211 (KPHLNVGTIG…ALDTFVPNPK (202 aa)). Residues 19–26 (GHVDHGKT) form a G1 region. 19 to 26 (GHVDHGKT) lines the GTP pocket. Residue Thr26 participates in Mg(2+) binding. The segment at 62-66 (GITIA) is G2. Residues 83-86 (DCPG) form a G3 region. GTP-binding positions include 83 to 87 (DCPGH) and 138 to 141 (NKAD). The tract at residues 138–141 (NKAD) is G4. The interval 179–181 (SAV) is G5.

It belongs to the TRAFAC class translation factor GTPase superfamily. Classic translation factor GTPase family. EF-Tu/EF-1A subfamily. Monomer.

It localises to the cytoplasm. It catalyses the reaction GTP + H2O = GDP + phosphate + H(+). GTP hydrolase that promotes the GTP-dependent binding of aminoacyl-tRNA to the A-site of ribosomes during protein biosynthesis. This is Elongation factor Tu from Leptospira borgpetersenii serovar Hardjo-bovis (strain JB197).